We begin with the raw amino-acid sequence, 22 residues long: Zinc metalloproteinase oxiagin (22 aa).

Residues 14-22 form the Peptidase M12B domain; it reads CYIEFYVVV.

It belongs to the venom metalloproteinase (M12B) family. P-III subfamily. P-IIId sub-subfamily. Heterotrimer; disulfide-linked. The heterotrimer consists of 1 metalloproteinase chain and 2 lectin chains. Zn(2+) serves as cofactor. Post-translationally, N-glycosylated. Expressed by the venom gland.

The protein resides in the secreted. In terms of biological role, snake venom metalloproteinase that inhibits the classical complement pathway dose-dependently. It acts by binding to carbohydrates of IgG within the antibody-sensitized sheep erythrocytes (EA) complex, and thus prevents interaction of component C2 with immobilized C4b. Also induces cation-independent hemagglutination that can be prevented by D-galactose pretreatment. The polypeptide is Zinc metalloproteinase oxiagin (Naja oxiana (Central Asian cobra)).